The sequence spans 46 residues: Esculentin-1 (46 aa).

A disulfide bridge links C40 with C46.

This sequence belongs to the frog skin active peptide (FSAP) family. Brevinin subfamily. In terms of tissue distribution, expressed by the skin glands.

It is found in the secreted. Functionally, shows antibacterial activity against representative Gram-negative and Gram-positive bacterial species, and hemolytic activity. The protein is Esculentin-1 of Pelophylax lessonae (Pool frog).